The sequence spans 267 residues: Protein COFACTOR ASSEMBLY OF COMPLEX C SUBUNIT B CCB1, chloroplastic (267 aa).

The transit peptide at 1–44 directs the protein to the chloroplast; it reads MATKLISPPLSCPWVTSREVIIKGLPRRRREWMVTKRNRVSAVT. Residues 45-84 lie on the Lumenal side of the membrane; the sequence is AMIVEPLSVVSSSAIQIHQWWEQNPNSLLLMTEATGGYSL. Residues 85–105 form a helical membrane-spanning segment; sequence ASYYTSLGLFVISVPGLWSLI. The Stromal segment spans residues 106 to 164; the sequence is KRSVKSKIVRKTFVVNDVKKEPKQVAGEILSFFTRKNFNITDRGETITFEGKMVPSRGQ. The chain crosses the membrane as a helical span at residues 165-185; it reads AALLTFCTCISLASVGLVLTI. Position 186 (Thr186) is a topological domain, lumenal. The helical transmembrane segment at 187 to 207 threads the bilayer; it reads VPDFGNNWFFIILLSPLAGVY. The Stromal portion of the chain corresponds to 208–267; sequence YWKKASRKEEIKVKMMVGSKGRLDEIVVQGDDVQVEEMRKELQLNEKGMVYVKGLFERSS.

The protein localises to the plastid. Its subcellular location is the chloroplast thylakoid membrane. Required for the biogenesis and accumulation of native cytochrome b6 in the thylakoid membrane. Controls the conversion of apocytochrome b6 to holocytochrome b6. Required for covalent binding of the c-type heme to cytochrome b6. The protein is Protein COFACTOR ASSEMBLY OF COMPLEX C SUBUNIT B CCB1, chloroplastic of Arabidopsis thaliana (Mouse-ear cress).